The following is a 403-amino-acid chain: Photosystem II stability/assembly factor HCF136, chloroplastic (403 aa).

A chloroplast-targeting transit peptide spans 1–53; it reads MASLQLCDGYLLFKPSVSPRFLSQRISHRLIPKASSSPPPSPSPSSSSSSLSF. Residues 31–50 form a disordered region; that stretch reads IPKASSSPPPSPSPSSSSSS. The transit peptide at 54–78 directs the protein to the thylakoid; sequence SRRELLYQSAAVSLSLSSIVGPARA.

This sequence belongs to the Ycf48 family. Interacts with PAM68. Expression in green tissue, not roots.

The protein resides in the plastid. The protein localises to the chloroplast thylakoid lumen. Essential for photosystem II (PSII) biogenesis; required for assembly of an early intermediate in PSII assembly that includes D2 (psbD) and cytochrome b559. Has been suggested to be required for chlorophyll a binding. The sequence is that of Photosystem II stability/assembly factor HCF136, chloroplastic (HCF136) from Arabidopsis thaliana (Mouse-ear cress).